The primary structure comprises 105 residues: Nucleoid-associated protein MW0434 (105 aa).

Positions 1 to 33 (MRGGGNMQQMMKQMQKMQKKMAQEQEKLKEERI) are disordered. Residues 7–16 (MQQMMKQMQK) show a composition bias toward low complexity. The span at 21 to 33 (MAQEQEKLKEERI) shows a compositional bias: basic and acidic residues.

Belongs to the YbaB/EbfC family. In terms of assembly, homodimer.

The protein localises to the cytoplasm. The protein resides in the nucleoid. Functionally, binds to DNA and alters its conformation. May be involved in regulation of gene expression, nucleoid organization and DNA protection. The chain is Nucleoid-associated protein MW0434 from Staphylococcus aureus (strain MW2).